A 196-amino-acid polypeptide reads, in one-letter code: ATP-dependent Clp protease proteolytic subunit (196 aa).

S101 functions as the Nucleophile in the catalytic mechanism. H126 is a catalytic residue.

This sequence belongs to the peptidase S14 family. In terms of assembly, component of the chloroplastic Clp protease core complex.

The protein localises to the plastid. It localises to the chloroplast stroma. The catalysed reaction is Hydrolysis of proteins to small peptides in the presence of ATP and magnesium. alpha-casein is the usual test substrate. In the absence of ATP, only oligopeptides shorter than five residues are hydrolyzed (such as succinyl-Leu-Tyr-|-NHMec, and Leu-Tyr-Leu-|-Tyr-Trp, in which cleavage of the -Tyr-|-Leu- and -Tyr-|-Trp bonds also occurs).. Cleaves peptides in various proteins in a process that requires ATP hydrolysis. Has a chymotrypsin-like activity. Plays a major role in the degradation of misfolded proteins. The sequence is that of ATP-dependent Clp protease proteolytic subunit from Gossypium barbadense (Sea Island cotton).